The chain runs to 515 residues: ATP synthase subunit alpha (515 aa).

Gly-171 to Thr-178 serves as a coordination point for ATP.

This sequence belongs to the ATPase alpha/beta chains family. As to quaternary structure, F-type ATPases have 2 components, CF(1) - the catalytic core - and CF(0) - the membrane proton channel. CF(1) has five subunits: alpha(3), beta(3), gamma(1), delta(1), epsilon(1). CF(0) has three main subunits: a(1), b(2) and c(9-12). The alpha and beta chains form an alternating ring which encloses part of the gamma chain. CF(1) is attached to CF(0) by a central stalk formed by the gamma and epsilon chains, while a peripheral stalk is formed by the delta and b chains.

It is found in the cell inner membrane. It carries out the reaction ATP + H2O + 4 H(+)(in) = ADP + phosphate + 5 H(+)(out). Produces ATP from ADP in the presence of a proton gradient across the membrane. The alpha chain is a regulatory subunit. The polypeptide is ATP synthase subunit alpha (Xylella fastidiosa (strain 9a5c)).